The following is a 1028-amino-acid chain: Sodium/potassium-transporting ATPase subunit alpha-4 (1028 aa).

The tract at residues 1–36 (MEPGKETAATSEQKPRPTLRASNTNRQPKVKRRKKD) is disordered. At 1–92 (MEPGKETAAT…NVLTPPPTTP (92 aa)) the chain is on the cytoplasmic side. The interaction with phosphoinositide-3 kinase stretch occupies residues 87–89 (PPP). The chain crosses the membrane as a helical span at residues 93 to 113 (EWIKFCKQLFGGFSLLLWTGS). At 114 to 137 (LLCFLAYGIHVSYYQENANKDNLY) the chain is on the extracellular side. Residues 138–158 (LGIVLSAVVIITGCFSYYQEA) form a helical membrane-spanning segment. Topologically, residues 159–294 (KSSKIMESFK…MGKTPIATEI (136 aa)) are cytoplasmic. The chain crosses the membrane as a helical span at residues 295-314 (EHFIHIITAVAVFLGVTFFF). Over 315 to 326 (LSLILGYTWLDA) the chain is Extracellular. A helical membrane pass occupies residues 327 to 344 (VIFLIGIIVANVPEGLLA). The Cytoplasmic segment spans residues 345–777 (TVTVCLTLTA…EEGRLIFDNL (433 aa)). Residue Asp382 is the 4-aspartylphosphate intermediate of the active site. Asp722 and Asp726 together coordinate Mg(2+). The chain crosses the membrane as a helical span at residues 778–797 (KKSIAYTLTSNIPEITPFLL). Over 798–807 (FIVLSIPLPL) the chain is Extracellular. The chain crosses the membrane as a helical span at residues 808–828 (GTITILCIDLGTDMVPAISLA). Topologically, residues 829–848 (YETPESDIMKRLPRNPKTDN) are cytoplasmic. A helical transmembrane segment spans residues 849 to 871 (LVNDRLIGMAYGQIGMIQALAGF). Residues 872–923 (FTYFVILAENGFKPLDLLGIRLYWDDTNLNDLEDTYGQQWTYEQRKVVEFTC) lie on the Extracellular side of the membrane. Residues 924–943 (QTAFFISIVIVQWADLIICK) traverse the membrane as a helical segment. Residues 944-956 (TRRNSLFKQGMKN) are Cytoplasmic-facing. Ser948 bears the Phosphoserine; by PKA mark. Residues 957 to 975 (KVLIFGLLEETILAACLSY) traverse the membrane as a helical segment. Residues 976-990 (IPGMDVALRMYPLKI) lie on the Extracellular side of the membrane. A helical membrane pass occupies residues 991–1011 (NWWFCALPYSVLIFIYDEVRK). The Cytoplasmic segment spans residues 1012 to 1028 (LIIRRRPGGWLEKETYY).

This sequence belongs to the cation transport ATPase (P-type) (TC 3.A.3) family. Type IIC subfamily. The sodium/potassium-transporting ATPase is composed of a catalytic alpha subunit, an auxiliary non-catalytic beta subunit and an additional regulatory subunit.

Its subcellular location is the cell membrane. The enzyme catalyses K(+)(out) + Na(+)(in) + ATP + H2O = K(+)(in) + Na(+)(out) + ADP + phosphate + H(+). With respect to regulation, specifically inhibited by an endogenous cardiac glycoside, ouabain. Functionally, this is the catalytic component of the active enzyme, which catalyzes the hydrolysis of ATP coupled with the exchange of sodium and potassium ions across the plasma membrane. This action creates the electrochemical gradient of sodium and potassium ions, providing the energy for active transport of various nutrients. Plays a role in sperm motility. The chain is Sodium/potassium-transporting ATPase subunit alpha-4 (Atp1a4) from Rattus norvegicus (Rat).